Reading from the N-terminus, the 1556-residue chain is Ras guanine nucleotide exchange factor G (1556 aa).

4 disordered regions span residues 19–63, 93–141, 163–239, and 254–296; these read IGNI…KNRG, LQLN…SSTT, SHVT…LSPS, and ATDS…NNNS. Low complexity-rich tracts occupy residues 25 to 54 and 96 to 141; these read NNNN…SGSN and NDTD…SSTT. Residues 170-186 show a composition bias toward acidic residues; that stretch reads DDDDDDESSSSEEDFDS. Residues 196-216 are compositionally biased toward low complexity; sequence TSSTTATTTTTTTSVSPLTSS. Over residues 256 to 271 the composition is skewed to polar residues; the sequence is DSDNQSLEPCNNKTIV. Positions 279–295 are enriched in low complexity; that stretch reads DNNNNHNNNNNNNNNNN. Residues 307–353 form the F-box 1 domain; the sequence is NKTFLDLDEKIYLKIFGYLFAEDLCSINRVSKHLCNIINNQQLWKDL. The interval 385–416 is disordered; that stretch reads NNNNNNNNNNNNNNNNSNISNNNNNINNSNGN. Residues 679–726 enclose the F-box 2 domain; the sequence is VFDISRVSDILLIKIFRNLDSIKDLSVCQRVSKRWNKAIAISSLWEQL. Disordered regions lie at residues 762 to 815 and 827 to 1101; these read QPSP…NGLN and GSNL…ITNN. Positions 827 to 848 are enriched in low complexity; the sequence is GSNLSNGGNSGSSFSPFNPLSG. The span at 849 to 866 shows a compositional bias: gly residues; sequence SNGGSSFGPFGSGGGGGS. Composition is skewed to low complexity over residues 867 to 880 and 888 to 910; these read NSNI…LNSS and FLAM…TIST. A compositionally biased stretch (polar residues) spans 911-935; it reads NCTPTGGSTTNSPNFQSPMVSSSTV. Low complexity-rich tracts occupy residues 943 to 957 and 972 to 1053; these read SPNL…ISLS and PDSS…IQPI. A compositionally biased stretch (polar residues) spans 1059-1076; it reads VNNNGSQSDLSKISDLNA. Positions 1077 to 1101 are enriched in low complexity; it reads NPNTTTTTTTNTIESSSSSSSITNN. The N-terminal Ras-GEF domain occupies 1116–1244; sequence MINVQKLMNL…LIRSFSRKLS (129 aa). The interval 1254–1279 is disordered; the sequence is IGITGGKSSRKGGGSGSGSGSGGGSG. The segment covering 1264–1279 has biased composition (gly residues); that stretch reads KGGGSGSGSGSGGGSG. One can recognise a Ras-GEF domain in the interval 1317–1548; the sequence is PAEEIAKQLT…YRVSMQREPR (232 aa).

Its function is as follows. Promotes the exchange of Ras-bound GDP by GTP. The polypeptide is Ras guanine nucleotide exchange factor G (gefG) (Dictyostelium discoideum (Social amoeba)).